Here is a 378-residue protein sequence, read N- to C-terminus: Probable serine/threonine-protein kinase PBL7 (378 aa).

The tract at residues Met1 to Lys49 is disordered. A lipid anchor (N-myristoyl glycine) is attached at Gly2. Residues Arg18–Ser29 are compositionally biased toward basic and acidic residues. A compositionally biased stretch (low complexity) spans Ser32–Glu47. Thr62 carries the phosphothreonine modification. The region spanning Phe73–Leu350 is the Protein kinase domain. ATP contacts are provided by residues Ile79 to Val87 and Lys102. A Phosphotyrosine modification is found at Tyr147. Catalysis depends on Asp200, which acts as the Proton acceptor. Residues Ser204 and Ser234 each carry the phosphoserine modification. Residues Thr235 and Thr240 each carry the phosphothreonine modification. Residue Tyr248 is modified to Phosphotyrosine.

This sequence belongs to the protein kinase superfamily. Ser/Thr protein kinase family. As to quaternary structure, interacts with BSU1 and BSL1. Phosphorylated at Ser-43, Ser-46 and Ser-234. As to expression, widely expressed.

The protein localises to the cell membrane. It carries out the reaction L-seryl-[protein] + ATP = O-phospho-L-seryl-[protein] + ADP + H(+). The enzyme catalyses L-threonyl-[protein] + ATP = O-phospho-L-threonyl-[protein] + ADP + H(+). In terms of biological role, serine/threonine-protein kinase involved in the positive regulation of brassinosteroid (BR) signaling and plant growth. Phosphorylates both BSU1 and BSL1 in vitro. This is Probable serine/threonine-protein kinase PBL7 from Arabidopsis thaliana (Mouse-ear cress).